The sequence spans 656 residues: Chromosomal replication initiator protein DnaA (656 aa).

The interval Met-1 to Pro-100 is domain I, interacts with DnaA modulators. Residues Thr-91–Pro-313 are disordered. Pro residues predominate over residues Gly-97–Arg-109. The interval Gln-101 to Ala-315 is domain II. 2 stretches are compositionally biased toward basic and acidic residues: residues Gly-126–Ala-144 and Gln-231–Pro-273. Positions Gly-291–Pro-313 are enriched in low complexity. The domain III, AAA+ region stretch occupies residues Arg-316–Ala-532. 4 residues coordinate ATP: Gly-360, Gly-362, Lys-363, and Thr-364. Residues Ser-533 to Gly-656 are domain IV, binds dsDNA.

The protein belongs to the DnaA family. In terms of assembly, oligomerizes as a right-handed, spiral filament on DNA at oriC.

It localises to the cytoplasm. Plays an essential role in the initiation and regulation of chromosomal replication. ATP-DnaA binds to the origin of replication (oriC) to initiate formation of the DNA replication initiation complex once per cell cycle. Binds the DnaA box (a 9 base pair repeat at the origin) and separates the double-stranded (ds)DNA. Forms a right-handed helical filament on oriC DNA; dsDNA binds to the exterior of the filament while single-stranded (ss)DNA is stabiized in the filament's interior. The ATP-DnaA-oriC complex binds and stabilizes one strand of the AT-rich DNA unwinding element (DUE), permitting loading of DNA polymerase. After initiation quickly degrades to an ADP-DnaA complex that is not apt for DNA replication. Binds acidic phospholipids. The sequence is that of Chromosomal replication initiator protein DnaA from Streptomyces coelicolor (strain ATCC BAA-471 / A3(2) / M145).